We begin with the raw amino-acid sequence, 77 residues long: Conotoxin ArMKLT2-022 (77 aa).

The first 22 residues, 1-22 (MKLTCVLIVAVLFLTACQLIAA), serve as a signal peptide directing secretion. The propeptide occupies 23-46 (DDSRDLKRFSRRKMRDGMLNTKNT). Q49 bears the Pyrrolidone carboxylic acid mark. Disulfide bonds link C50/C65, C57/C68, and C64/C73.

This sequence belongs to the conotoxin O1 superfamily. As to expression, expressed by the venom duct.

It localises to the secreted. The sequence is that of Conotoxin ArMKLT2-022 from Conus arenatus (Sand-dusted cone).